The chain runs to 2352 residues: Ectopic P granules protein 5 (2352 aa).

Disordered regions lie at residues 1–112 (MAEL…IFPR) and 1315–1335 (KNRESPLPPEIGSPRSRSSAK). The span at 66–81 (DSLKREEASEPLKDVR) shows a compositional bias: basic and acidic residues.

The protein belongs to the EPG5 family. As to expression, expressed in pharyngeal and body wall muscles and intestine cells.

The protein resides in the cytoplasm. It is found in the cytoplasmic vesicle. Its subcellular location is the phagosome membrane. Its function is as follows. Involved in the maturation of autophagosomes into autolysosomes during starvation-induced autotrophy. Specifically, involved in the clearance of apoptotic cells by promoting the delivery of engulfed apoptotic cells to the lysosome. This Caenorhabditis elegans protein is Ectopic P granules protein 5.